The sequence spans 120 residues: Large ribosomal subunit protein uL18 (120 aa).

A disordered region spans residues 1–23 (MKLSRKESVRRRHQRVRRKINGT). The segment covering 8-20 (SVRRRHQRVRRKI) has biased composition (basic residues).

The protein belongs to the universal ribosomal protein uL18 family. Part of the 50S ribosomal subunit; part of the 5S rRNA/L5/L18/L25 subcomplex. Contacts the 5S and 23S rRNAs.

This is one of the proteins that bind and probably mediate the attachment of the 5S RNA into the large ribosomal subunit, where it forms part of the central protuberance. The protein is Large ribosomal subunit protein uL18 of Microcystis aeruginosa (strain NIES-843 / IAM M-2473).